The primary structure comprises 466 residues: Putative D-3-phosphoglycerate dehydrogenase (466 aa).

The span at 1–15 (MDIKGGRRGNVEDSL) shows a compositional bias: basic and acidic residues. The interval 1–26 (MDIKGGRRGNVEDSLNKLSLSPPDNN) is disordered. Polar residues predominate over residues 16 to 26 (NKLSLSPPDNN). Serine 87 is subject to Phosphoserine. Residues 205-206 (HI) and aspartate 225 each bind NAD(+). Serine 258 is modified (phosphoserine). NAD(+) contacts are provided by residues 282–284 (ASR) and aspartate 308. Arginine 284 is a catalytic residue. Glutamate 313 is a catalytic residue. Residue histidine 344 is the Proton donor of the active site. Position 344–347 (344–347 (HIGG)) interacts with NAD(+). The region spanning 396-466 (RVLFVHRNVP…PCKINTRLLY (71 aa)) is the ACT domain.

This sequence belongs to the D-isomer specific 2-hydroxyacid dehydrogenase family.

It catalyses the reaction (2R)-3-phosphoglycerate + NAD(+) = 3-phosphooxypyruvate + NADH + H(+). The enzyme catalyses (R)-2-hydroxyglutarate + NAD(+) = 2-oxoglutarate + NADH + H(+). The protein operates within amino-acid biosynthesis; L-serine biosynthesis; L-serine from 3-phospho-D-glycerate: step 1/3. Functionally, catalyzes the reversible oxidation of 3-phospho-D-glycerate to 3-phosphonooxypyruvate, the first step of the phosphorylated L-serine biosynthesis pathway. Also catalyzes the reversible oxidation of 2-hydroxyglutarate to 2-oxoglutarate. This chain is Putative D-3-phosphoglycerate dehydrogenase, found in Schizosaccharomyces pombe (strain 972 / ATCC 24843) (Fission yeast).